Consider the following 318-residue polypeptide: Basic leucine zipper (bZIP) transcription factor atfB (318 aa).

The tract at residues 114–157 (FNSSPPEYAPPKHRSSLSEQSQTDGYGVSTRRRKASAIDQCEQQ) is disordered. Residues 160-199 (REKREKFLERNRLAASKCRQKKKEHTKLLETRFREVSNKK) form a basic motif region. Residues 160-223 (REKREKFLER…LNLKNEMLRH (64 aa)) form the bZIP domain. Residues 202 to 216 (LESEIEHLRSEVLNL) are leucine-zipper. Residues 275–301 (DGPMQLPSEMGSPLDQRRDSEQSIMTE) are disordered.

Belongs to the bZIP family. ATF subfamily.

The protein resides in the nucleus. In terms of biological role, transcription factor that acts as a key player in the regulatory circuit that integrates secondary metabolism and cellular response to oxidative stress. Regulates the genes involved in development and stress response through direct binding to their promoters. Particularly involved in the resistance to oxidative stress in asexual conidiospores. This chain is Basic leucine zipper (bZIP) transcription factor atfB, found in Aspergillus oryzae (strain ATCC 42149 / RIB 40) (Yellow koji mold).